The sequence spans 56 residues: MLPHTAFSNHIHYHFINEAPFRLCIYTLFHAHTCFSCGLSLSLMEVIMDISQLLIS.

This is an uncharacterized protein from Schizosaccharomyces pombe (strain 972 / ATCC 24843) (Fission yeast).